A 107-amino-acid polypeptide reads, in one-letter code: MNTAIIYVGAAIAEIAGCFAFWGWLRLGKPVWWLAPGLLSLALFAYLLTLVESEAAGRAYAAYGGIYIVASLAWLWSVEGVRPDRWDVSGACVCLAGAAIILWGPRG.

Helical transmembrane passes span 5 to 25, 31 to 51, 61 to 81, and 85 to 105; these read IIYV…WGWL, VWWL…LTLV, AAYG…VEGV, and RWDV…LWGP.

This sequence belongs to the UPF0060 family.

Its subcellular location is the cell inner membrane. The polypeptide is UPF0060 membrane protein RPB_2370 (Rhodopseudomonas palustris (strain HaA2)).